The primary structure comprises 142 residues: Hemoglobin subunit alpha (142 aa).

A Globin domain is found at 2–142 (HLTADDKKHI…VSNVLTSKYR (141 aa)). Heme b is bound by residues His59 and His88.

Belongs to the globin family. As to quaternary structure, heterotetramer of two alpha chains and two beta chains. As to expression, red blood cells.

Its function is as follows. Involved in oxygen transport from the lung to the various peripheral tissues. The polypeptide is Hemoglobin subunit alpha (hba-A) (Xenopus tropicalis (Western clawed frog)).